Reading from the N-terminus, the 161-residue chain is uncharacterized protein (161 aa).

This is an uncharacterized protein from Escherichia coli (strain K12).